The primary structure comprises 704 residues: DNA ligase (704 aa).

NAD(+) is bound by residues 43 to 47 (DADYD), 92 to 93 (SL), and Glu124. Catalysis depends on Lys126, which acts as the N6-AMP-lysine intermediate. Positions 147, 182, 298, and 322 each coordinate NAD(+). Residues Cys427, Cys430, Cys445, and Cys451 each coordinate Zn(2+). Positions 625–704 (PVASPVAGKI…DGWLRLIGDA (80 aa)) constitute a BRCT domain.

This sequence belongs to the NAD-dependent DNA ligase family. LigA subfamily. Requires Mg(2+) as cofactor. Mn(2+) serves as cofactor.

The catalysed reaction is NAD(+) + (deoxyribonucleotide)n-3'-hydroxyl + 5'-phospho-(deoxyribonucleotide)m = (deoxyribonucleotide)n+m + AMP + beta-nicotinamide D-nucleotide.. Functionally, DNA ligase that catalyzes the formation of phosphodiester linkages between 5'-phosphoryl and 3'-hydroxyl groups in double-stranded DNA using NAD as a coenzyme and as the energy source for the reaction. It is essential for DNA replication and repair of damaged DNA. The protein is DNA ligase of Cereibacter sphaeroides (strain ATCC 17023 / DSM 158 / JCM 6121 / CCUG 31486 / LMG 2827 / NBRC 12203 / NCIMB 8253 / ATH 2.4.1.) (Rhodobacter sphaeroides).